Consider the following 99-residue polypeptide: Small ribosomal subunit protein uS19 (99 aa).

Residues 76-99 are disordered; the sequence is PTRSFRGHAGGGKAEKGGSAPRKK.

The protein belongs to the universal ribosomal protein uS19 family.

In terms of biological role, protein S19 forms a complex with S13 that binds strongly to the 16S ribosomal RNA. This is Small ribosomal subunit protein uS19 from Pelodictyon phaeoclathratiforme (strain DSM 5477 / BU-1).